The following is a 344-amino-acid chain: S-adenosylmethionine:tRNA ribosyltransferase-isomerase (344 aa).

The protein belongs to the QueA family. As to quaternary structure, monomer.

It localises to the cytoplasm. It catalyses the reaction 7-aminomethyl-7-carbaguanosine(34) in tRNA + S-adenosyl-L-methionine = epoxyqueuosine(34) in tRNA + adenine + L-methionine + 2 H(+). It functions in the pathway tRNA modification; tRNA-queuosine biosynthesis. In terms of biological role, transfers and isomerizes the ribose moiety from AdoMet to the 7-aminomethyl group of 7-deazaguanine (preQ1-tRNA) to give epoxyqueuosine (oQ-tRNA). This Rhizorhabdus wittichii (strain DSM 6014 / CCUG 31198 / JCM 15750 / NBRC 105917 / EY 4224 / RW1) (Sphingomonas wittichii) protein is S-adenosylmethionine:tRNA ribosyltransferase-isomerase.